A 189-amino-acid chain; its full sequence is Peptidyl-tRNA hydrolase (189 aa).

Residue Tyr-14 coordinates tRNA. His-19 (proton acceptor) is an active-site residue. TRNA-binding residues include Phe-64, Asn-66, and Asn-112.

The protein belongs to the PTH family. As to quaternary structure, monomer.

Its subcellular location is the cytoplasm. The catalysed reaction is an N-acyl-L-alpha-aminoacyl-tRNA + H2O = an N-acyl-L-amino acid + a tRNA + H(+). In terms of biological role, hydrolyzes ribosome-free peptidyl-tRNAs (with 1 or more amino acids incorporated), which drop off the ribosome during protein synthesis, or as a result of ribosome stalling. Functionally, catalyzes the release of premature peptidyl moieties from peptidyl-tRNA molecules trapped in stalled 50S ribosomal subunits, and thus maintains levels of free tRNAs and 50S ribosomes. This is Peptidyl-tRNA hydrolase from Erythrobacter litoralis (strain HTCC2594).